Consider the following 761-residue polypeptide: MSAHPVDTVTAATATPDVAQPFKELGLKDDEYARIKEILGRRPTEAELAMYSVMWSEHCSYKSSKVHLKYFGETTTDEMRSSMLAGIGENAGVVDIGDGWAVTFKVESHNHPSYVEPYQGAATGVGGIVRDIMAMGARPIAVMDQLRFGAADAPDTRRVVDGVVRGVGGYGNSLGLPNVGGETVFDESYAGNPLVNALCAGAMRVEDLHLAFASGAGNKIILFGARTGLDGIGGVSVLASETFDGDESGTGRKKLPAVQVGDPFTEKVLIECCLELYAAKLVVGIQDLGGAGLSCATSELAAAGDGGMHINLEQVPMRATGMTAAEVLSSESQERMCAVVTPDNVDAFMEVCKKWDVLATVIGEVTDGERLTISWHGETVVDVPPRTVAHEGPVYERPVQRPASQDALVANTTAGLTRPESADELKATLLKMLASPALCSRKWITEQYDRYVRGNTVLAENADSGVIRVDEKTGRGIALATDASGRYTALDPYAGAQLALAEAFRNVAVTGATPKAVSNCLNFGSPEDPGVMWQFQQAVRGLADGCAKLGIPVTGGNVSFYNQTGSTPILPTPVVAVLGVIDDVHRRIPTGLGLEPGETLILLGDTRDEFDGSIWSQVEHGHLGGVPPKVDLEREQLLADILLAASRDGLVSAAHDLSEGGLAQTVVEAALAGETGCRILLPDDADPFVTLFSESSGRVLVAVPRTEETRFTGMCTARNLPWVRIGVVDEGSDSVEVQGQFSVSLAELRTTFEGTLPALFG.

Residue H58 is part of the active site. Positions 61 and 105 each coordinate ATP. Position 107 (E107) interacts with Mg(2+). Residues S108–H111 and R130 each bind substrate. Catalysis depends on H109, which acts as the Proton acceptor. A Mg(2+)-binding site is contributed by D131. Residue Q259 participates in substrate binding. D287 contributes to the Mg(2+) binding site. E331–Q333 serves as a coordination point for substrate. Residues N519 and G556 each contribute to the ATP site. N557 lines the Mg(2+) pocket. Substrate is bound at residue S559.

The protein belongs to the FGAMS family. In terms of assembly, monomer. Part of the FGAM synthase complex composed of 1 PurL, 1 PurQ and 2 PurS subunits.

It localises to the cytoplasm. It catalyses the reaction N(2)-formyl-N(1)-(5-phospho-beta-D-ribosyl)glycinamide + L-glutamine + ATP + H2O = 2-formamido-N(1)-(5-O-phospho-beta-D-ribosyl)acetamidine + L-glutamate + ADP + phosphate + H(+). It functions in the pathway purine metabolism; IMP biosynthesis via de novo pathway; 5-amino-1-(5-phospho-D-ribosyl)imidazole from N(2)-formyl-N(1)-(5-phospho-D-ribosyl)glycinamide: step 1/2. Functionally, part of the phosphoribosylformylglycinamidine synthase complex involved in the purines biosynthetic pathway. Catalyzes the ATP-dependent conversion of formylglycinamide ribonucleotide (FGAR) and glutamine to yield formylglycinamidine ribonucleotide (FGAM) and glutamate. The FGAM synthase complex is composed of three subunits. PurQ produces an ammonia molecule by converting glutamine to glutamate. PurL transfers the ammonia molecule to FGAR to form FGAM in an ATP-dependent manner. PurS interacts with PurQ and PurL and is thought to assist in the transfer of the ammonia molecule from PurQ to PurL. The polypeptide is Phosphoribosylformylglycinamidine synthase subunit PurL (Rhodococcus jostii (strain RHA1)).